A 1345-amino-acid polypeptide reads, in one-letter code: Vascular endothelial growth factor receptor 2 (1345 aa).

Positions 1 to 19 (MESKALLAVALWFCVETRA) are cleaved as a signal peptide. The Extracellular segment spans residues 20–762 (ASVGLPGDFL…EGAQEKTNLE (743 aa)). 5 N-linked (GlcNAc...) asparagine glycosylation sites follow: asparagine 46, asparagine 98, asparagine 145, asparagine 160, and asparagine 247. Ig-like C2-type domains lie at 46-111 (NTTL…RDVD), 143-209 (NKNK…INDE), 226-325 (YDVI…TFVR), 330-416 (PFIA…HMVS), 423-542 (PQIG…RVIS), 549-656 (PEIT…LVKQ), and 665-751 (PMIT…TLFI). Cysteine 53 and cysteine 105 are oxidised to a cystine. Cysteine 152 and cysteine 202 form a disulfide bridge. A disulfide bridge links cysteine 248 with cysteine 309. N-linked (GlcNAc...) asparagine glycans are attached at residues asparagine 320, asparagine 376, asparagine 397, asparagine 509, asparagine 521, asparagine 578, asparagine 611, asparagine 617, asparagine 629, asparagine 673, asparagine 702, and asparagine 719. 2 cysteine pairs are disulfide-bonded: cysteine 447-cysteine 528 and cysteine 569-cysteine 640. A disulfide bridge links cysteine 686 with cysteine 735. Residues 763–783 (VIILVGTAVIAMFFWLLLVIV) traverse the membrane as a helical segment. The Cytoplasmic portion of the chain corresponds to 784–1345 (LRTVKRANEG…SGTTLRSPPV (562 aa)). Tyrosine 799 carries the phosphotyrosine modification. A Protein kinase domain is found at 832-1160 (LKLGKPLGRG…FSELVEHLGN (329 aa)). ATP contacts are provided by residues 838-846 (LGRGAFGQV) and lysine 866. Tyrosine 949 bears the Phosphotyrosine; by autocatalysis mark. 2 positions are modified to phosphoserine: serine 980 and serine 982. Tyrosine 994 carries the phosphotyrosine; by autocatalysis modification. Cysteine 1022 and cysteine 1043 form a disulfide bridge. Aspartate 1026 (proton acceptor) is an active-site residue. A phosphotyrosine; by autocatalysis mark is found at tyrosine 1052, tyrosine 1057, tyrosine 1173, and tyrosine 1212. A phosphoserine mark is found at serine 1229 and serine 1233. Position 1236 is a phosphothreonine (threonine 1236). A disordered region spans residues 1272–1316 (DRNKLSPSFGGMMPSKSRESVASEGSNQTSGYQSGYHSDDTDTTV). Polar residues predominate over residues 1294-1307 (SEGSNQTSGYQSGY). A phosphotyrosine; by autocatalysis mark is found at tyrosine 1303, tyrosine 1307, and tyrosine 1317.

The protein belongs to the protein kinase superfamily. Tyr protein kinase family. CSF-1/PDGF receptor subfamily. As to quaternary structure, homodimer in the presence of bound dimeric VEGFA, VEGFC or VEGFD ligands; monomeric in the absence of bound ligands. Can also form heterodimers with FLT1/VEGFR1 and KDR/VEGFR2. Interacts (tyrosine phosphorylated) with LFYN, NCK1, PLCG1. Interacts (tyrosine-phosphorylated active form preferentially) with DAB2IP (via C2 domain and active form preferentially); the interaction occurs at the late phase of VEGFA response and inhibits KDR/VEGFR2 activity. Interacts with SHBSH2D2A/TSAD, GRB2, MYOF, CBL and PDCD6. Interacts (via C-terminus domain) with ERN1 (via kinase domain); the interaction is facilitated in a XBP1 isoform 1- and vascular endothelial growth factor (VEGF)-dependent manner in endothelial cells. Interacts (via juxtamembrane region) with chaperone PDCL3 (via thioredoxin fold region); the interaction leads to increased KDR/VEGFR2 abundance through inhibition of its ubiquitination and degradation. Interacts (tyrosine phosphorylated) with CCDC88A/GIV (via SH2-like region); binding requires autophosphorylation of the KDR/VEGFR2 C-terminal region. Interacts with isoform 2 of BSG. Interacts with SLC31A1; this interaction is induced upon VEGFA stimulation leading to SLC31A1 and KDR subsequent co-internalization to early endosomes, thereby activating KDR downstream signaling in endothelial cells. In terms of processing, N-glycosylated. Ubiquitinated. Tyrosine phosphorylation of the receptor promotes its poly-ubiquitination, leading to its degradation via the proteasome or lysosomal proteases. Post-translationally, autophosphorylated on tyrosine residues upon ligand binding. Autophosphorylation occurs in trans, i.e. one subunit of the dimeric receptor phosphorylates tyrosine residues on the other subunit. Phosphorylation at Tyr-949 is important for interaction with SH2D2A/TSAD and VEGFA-mediated reorganization of the actin cytoskeleton. Phosphorylation at Tyr-1173 is important for interaction with PLCG1 and SHB. Phosphorylation at Tyr-1212 is important for interaction with NCK1 and FYN. Dephosphorylated by PTPRJ at Tyr-799, Tyr-949, Tyr-994, Tyr-1052, Tyr-1057, Tyr-1173 and Tyr-1212. In terms of processing, the inhibitory disulfide bond between Cys-1022 and Cys-1043 may serve as a specific molecular switch for H(2)S-induced modification that regulates KDR/VEGFR2 function. As to expression, expressed in endothelial cells (at protein level). Detected in embryonic endothelial cells, as well as hematopoietic stem and progenitor cells. Detected in vascular endothelium. Expressed at high levels in adult heart, lung, kidney, brain and skeletal muscle, but is also expressed at lower levels in most other adult tissues.

The protein resides in the cell junction. The protein localises to the endoplasmic reticulum. It is found in the cell membrane. Its subcellular location is the cytoplasm. It localises to the nucleus. The protein resides in the cytoplasmic vesicle. The protein localises to the early endosome. It is found in the secreted. It carries out the reaction L-tyrosyl-[protein] + ATP = O-phospho-L-tyrosyl-[protein] + ADP + H(+). Its activity is regulated as follows. Present in an inactive conformation in the absence of bound ligand. Binding of VEGFA, VEGFC or VEGFD leads to dimerization and activation by autophosphorylation on tyrosine residues. May be regulated by hydrogen sulfide (H(2)S) levels via a sensitive intracellular disulfide bond. Tyrosine-protein kinase that acts as a cell-surface receptor for VEGFA, VEGFC and VEGFD. Plays an essential role in the regulation of angiogenesis, vascular development, vascular permeability, and embryonic hematopoiesis. Promotes proliferation, survival, migration and differentiation of endothelial cells. Promotes reorganization of the actin cytoskeleton. Isoforms lacking a transmembrane domain, such as isoform 2, may function as decoy receptors for VEGFA, VEGFC and/or VEGFD. Isoform 2 plays an important role as a negative regulator of VEGFA- and VEGFC-mediated lymphangiogenesis by limiting the amount of free VEGFA and/or VEGFC and by preventing their binding to FLT4. Modulates FLT1 and FLT4 signaling by forming heterodimers. Binding of vascular growth factors to isoform 1 leads to the activation of several signaling cascades. Activation of PLCG1 leads to the production of the cellular signaling molecules diacylglycerol and inositol 1,4,5-trisphosphate and the activation of protein kinase C. Mediates activation of MAPK1/ERK2, MAPK3/ERK1 and the MAP kinase signaling pathway, as well as of the AKT1 signaling pathway. Mediates phosphorylation of PIK3R1, the regulatory subunit of phosphatidylinositol 3-kinase, reorganization of the actin cytoskeleton and activation of PTK2/FAK1. Required for VEGFA-mediated induction of NOS2 and NOS3, leading to the production of the signaling molecule nitric oxide (NO) by endothelial cells. Phosphorylates PLCG1. Promotes phosphorylation of FYN, NCK1, NOS3, PIK3R1, PTK2/FAK1 and SRC. The chain is Vascular endothelial growth factor receptor 2 from Mus musculus (Mouse).